The sequence spans 339 residues: Homeobox protein DBX2 (339 aa).

The segment at residues 186–245 is a DNA-binding region (homeobox); it reads GILRRAVFSEDQRKALEKMFQKQKYISKTDRKKLAINLGLKESQVKIWFQNRRMKWRNSK. The segment at 282–318 is disordered; that stretch reads VPQQHSSPRWRENSPEPSERLIQESSGAPPPEANSLQ. The span at 290-303 shows a compositional bias: basic and acidic residues; the sequence is RWRENSPEPSERLI.

This sequence belongs to the H2.0 homeobox family.

It is found in the nucleus. This Homo sapiens (Human) protein is Homeobox protein DBX2 (DBX2).